Here is a 261-residue protein sequence, read N- to C-terminus: Small ribosomal subunit protein eS1 (261 aa).

Residues 1–18 (MAVGKNKRISKGKKGGKK) show a composition bias toward basic residues. Residues 1–21 (MAVGKNKRISKGKKGGKKKAT) are disordered.

This sequence belongs to the eukaryotic ribosomal protein eS1 family. In terms of assembly, component of the small ribosomal subunit. Mature ribosomes consist of a small (40S) and a large (60S) subunit. The 40S subunit contains about 33 different proteins and 1 molecule of RNA (18S). The 60S subunit contains about 49 different proteins and 3 molecules of RNA (25S, 5.8S and 5S).

It localises to the cytoplasm. The chain is Small ribosomal subunit protein eS1 (cyc07) from Daucus carota (Wild carrot).